The chain runs to 345 residues: Heat-inducible transcription repressor HrcA (345 aa).

It belongs to the HrcA family.

Its function is as follows. Negative regulator of class I heat shock genes (grpE-dnaK-dnaJ and groELS operons). Prevents heat-shock induction of these operons. This is Heat-inducible transcription repressor HrcA from Desulfitobacterium hafniense (strain DSM 10664 / DCB-2).